The primary structure comprises 623 residues: Frizzled and smoothened-like protein M (623 aa).

Positions M1–S18 are cleaved as a signal peptide. The Extracellular portion of the chain corresponds to Q19–T243. Positions D25 to Y163 constitute an FZ domain. 2 cysteine pairs are disulfide-bonded: C30–C100 and C42–C93. N-linked (GlcNAc...) asparagine glycosylation is found at N57, N106, N109, N154, N159, N169, N199, and N239. The chain crosses the membrane as a helical span at residues L244–P264. At K265 to Y273 the chain is on the cytoplasmic side. A helical membrane pass occupies residues G274–G294. The Extracellular segment spans residues G295 to S317. Residues T318–F338 traverse the membrane as a helical segment. At D339–Q354 the chain is on the cytoplasmic side. A helical membrane pass occupies residues K355–T375. Residues K376 to T397 lie on the Extracellular side of the membrane. Residues L398–I418 form a helical membrane-spanning segment. Over Y419–K439 the chain is Cytoplasmic. The chain crosses the membrane as a helical span at residues P440–H460. The Extracellular portion of the chain corresponds to N461 to S494. N-linked (GlcNAc...) asparagine glycosylation is present at N463. The helical transmembrane segment at I495 to L515 threads the bilayer. Residues Q516–K623 are Cytoplasmic-facing. The disordered stretch occupies residues P552–N590. A compositionally biased stretch (low complexity) spans S555–S580.

The protein belongs to the G-protein coupled receptor Fz/Smo family.

The protein resides in the membrane. In Dictyostelium discoideum (Social amoeba), this protein is Frizzled and smoothened-like protein M (fslM-1).